The primary structure comprises 354 residues: Uroporphyrinogen decarboxylase (354 aa).

Substrate-binding positions include 27-31, D77, Y154, T209, and H327; that span reads RQAGR.

It belongs to the uroporphyrinogen decarboxylase family. Homodimer.

It localises to the cytoplasm. It catalyses the reaction uroporphyrinogen III + 4 H(+) = coproporphyrinogen III + 4 CO2. Its pathway is porphyrin-containing compound metabolism; protoporphyrin-IX biosynthesis; coproporphyrinogen-III from 5-aminolevulinate: step 4/4. In terms of biological role, catalyzes the decarboxylation of four acetate groups of uroporphyrinogen-III to yield coproporphyrinogen-III. The polypeptide is Uroporphyrinogen decarboxylase (Salmonella newport (strain SL254)).